A 1508-amino-acid chain; its full sequence is Ras guanine nucleotide exchange factor Y (1508 aa).

8 disordered regions span residues 1 to 73 (MIII…NNNE), 128 to 182 (KVLS…PKSV), 197 to 272 (IDNN…YSTS), 396 to 517 (ILQC…EDED), 565 to 593 (LSEN…SIPT), 606 to 727 (LPNI…AEPS), 831 to 1021 (NVII…SNKE), and 1153 to 1172 (TNED…TNKN). 2 stretches are compositionally biased toward low complexity: residues 9 to 22 (NINN…NNNS) and 33 to 72 (NNNN…NNNN). 2 stretches are compositionally biased toward polar residues: residues 128–150 (KVLS…TNTI) and 172–182 (DRTSQDIPKSV). A compositionally biased stretch (low complexity) spans 199-216 (NNTTNNNSNNNNNSSLST). Residues 223–232 (DSLETNPIKD) are compositionally biased toward basic and acidic residues. Acidic residues predominate over residues 233–250 (EESEESEESEESKEEEEE). The segment covering 255 to 272 (IKTTKTTSETIESSYSTS) has biased composition (low complexity). Basic and acidic residues predominate over residues 399 to 409 (CKDDSSSKDQD). Low complexity predominate over residues 413-447 (NNSAGSSGNSSASNSNRNSIAFSSSNHFSSESSQS). Over residues 465–475 (PQSPSPSPSPP) the composition is skewed to pro residues. Residues 492–510 (FNQQTNFSVSPTKSPSNEK) are compositionally biased toward polar residues. Composition is skewed to low complexity over residues 574–593 (NQPS…SIPT), 606–660 (LPNI…LTES), 668–687 (NNNN…NNNN), 831–855 (NVII…NTVK), 862–891 (NKSS…SLTP), 942–984 (SLWS…SPPT), 993–1019 (ITTG…NNSN), and 1160–1172 (SNSN…TNKN). Residues 659-686 (ESLKTRIEENNNNNNNKNINNNNNNNNN) adopt a coiled-coil conformation. The region spanning 1074-1234 (NRIKVRSASL…IILKIIDRKA (161 aa)) is the N-terminal Ras-GEF domain. The Ras-GEF domain maps to 1278–1508 (DDLEIARQLT…LYKQSKIIEP (231 aa)).

Its function is as follows. Promotes the exchange of Ras-bound GDP by GTP. In Dictyostelium discoideum (Social amoeba), this protein is Ras guanine nucleotide exchange factor Y (gefY).